A 1105-amino-acid polypeptide reads, in one-letter code: Probable diguanylate cyclase DgcE (1105 aa).

10 helical membrane-spanning segments follow: residues Leu9–Phe29, Gln38–Tyr58, Met64–Phe84, Ser88–Leu108, Leu127–Thr147, Phe156–Leu176, Leu190–Leu207, Tyr211–Val228, Phe236–Leu256, and Trp270–Phe290. Residues Ser300 to Glu370 form the PAS 1 domain. PAC domains follow at residues Tyr374 to Gln426 and Phe501 to Gln552. The PAS 2 domain occupies Glu553 to Thr623. The PAC 3 domain maps to Ser626–Tyr680. The GGDEF domain maps to Gln712–Pro845. Asp720 contacts Mg(2+). Residues Asn728, His733, and Asp737 each contribute to the substrate site. A Mg(2+)-binding site is contributed by Asp763. Asp763 (proton acceptor) is an active-site residue. Arg783 is a substrate binding site. The region spanning Ala855–Ile1104 is the EAL domain.

Homodimer. Mg(2+) serves as cofactor.

Its subcellular location is the cell inner membrane. The enzyme catalyses 2 GTP = 3',3'-c-di-GMP + 2 diphosphate. The protein operates within purine metabolism; 3',5'-cyclic di-GMP biosynthesis. In terms of biological role, catalyzes the synthesis of cyclic-di-GMP (c-di-GMP) via the condensation of 2 GTP molecules. Involved in the control of the switch from cell motility to adhesion via regulation of cellular levels of c-di-GMP. Part of a signaling cascade that regulates curli biosynthesis. The cascade is composed of two c-di-GMP control modules, in which c-di-GMP controlled by the DgcE/PdeH pair (module I) regulates the activity of the DgcM/PdeR pair (module II), which in turn regulates activity of the transcription factor MlrA and expression of the master biofilm regulator csgD. In Escherichia coli (strain K12), this protein is Probable diguanylate cyclase DgcE.